We begin with the raw amino-acid sequence, 428 residues long: Enolase 1 (428 aa).

Residue glutamine 167 participates in (2R)-2-phosphoglycerate binding. Catalysis depends on glutamate 209, which acts as the Proton donor. The Mg(2+) site is built by aspartate 246, glutamate 288, and aspartate 315. (2R)-2-phosphoglycerate is bound by residues lysine 340, arginine 369, serine 370, and lysine 391. The active-site Proton acceptor is the lysine 340.

This sequence belongs to the enolase family. As to quaternary structure, component of the RNA degradosome, a multiprotein complex involved in RNA processing and mRNA degradation. Requires Mg(2+) as cofactor.

It localises to the cytoplasm. The protein resides in the secreted. The protein localises to the cell surface. The catalysed reaction is (2R)-2-phosphoglycerate = phosphoenolpyruvate + H2O. The protein operates within carbohydrate degradation; glycolysis; pyruvate from D-glyceraldehyde 3-phosphate: step 4/5. Its function is as follows. Catalyzes the reversible conversion of 2-phosphoglycerate (2-PG) into phosphoenolpyruvate (PEP). It is essential for the degradation of carbohydrates via glycolysis. The chain is Enolase 1 from Pseudomonas syringae pv. syringae (strain B728a).